Reading from the N-terminus, the 447-residue chain is Alpha-1,3-mannosyl-glycoprotein 2-beta-N-acetylglucosaminyltransferase (447 aa).

The Cytoplasmic portion of the chain corresponds to 1 to 6 (MLKKQT). The chain crosses the membrane as a helical; Signal-anchor for type II membrane protein span at residues 7–29 (AGLVLWGAIIFVGWNALLLLFFW). Residues 30 to 447 (TRPAPGRLPS…TWTGYDPSWN (418 aa)) lie on the Lumenal side of the membrane. Residues cysteine 115 and cysteine 145 are joined by a disulfide bond. Residues arginine 117, aspartate 144, histidine 190, and aspartate 212 each coordinate substrate. Aspartate 213 provides a ligand contact to Mn(2+). Cysteine 239 and cysteine 305 are joined by a disulfide. Aspartate 291 acts as the Proton acceptor in catalysis. Position 322 (serine 322) interacts with substrate.

The protein belongs to the glycosyltransferase 13 family. Interacts with MGAT4D. Interacts with BRI3. The cofactor is Mn(2+). Detected in kidney, liver and brain.

It localises to the golgi apparatus membrane. The protein localises to the cytoplasm. It is found in the perinuclear region. The catalysed reaction is N(4)-(alpha-D-Man-(1-&gt;3)-[alpha-D-Man-(1-&gt;3)-[alpha-D-Man-(1-&gt;6)]-alpha-D-Man-(1-&gt;6)]-beta-D-Man-(1-&gt;4)-beta-D-GlcNAc-(1-&gt;4)-beta-D-GlcNAc)-L-asparaginyl-[protein] (N-glucan mannose isomer 5A1,2) + UDP-N-acetyl-alpha-D-glucosamine = N(4)-{beta-D-GlcNAc-(1-&gt;2)-alpha-D-Man-(1-&gt;3)-[alpha-D-Man-(1-&gt;3)-[alpha-D-Man-(1-&gt;6)]-alpha-D-Man-(1-&gt;6)]-beta-D-Man-(1-&gt;4)-beta-D-GlcNAc-(1-&gt;4)-beta-D-GlcNAc}-L-asparaginyl-[protein] + UDP + H(+). Its pathway is protein modification; protein glycosylation. Initiates complex N-linked carbohydrate formation. Essential for the conversion of high-mannose to hybrid and complex N-glycans. The protein is Alpha-1,3-mannosyl-glycoprotein 2-beta-N-acetylglucosaminyltransferase (Mgat1) of Mus musculus (Mouse).